Reading from the N-terminus, the 355-residue chain is F-box only protein 32 (355 aa).

A Nuclear localization signal motif is present at residues 62-67 (KKRKKD). Residues 169-173 (LLQTL) carry the Nuclear export signal motif. Residues 223–271 (LTITDLPVCLQLNIMQRLSDGRDLVSLGQAAPDLHVLSEDRLLWKRLCQ) enclose the F-box domain. The Bipartite nuclear localization signal signature appears at 280–295 (RKRLILSDKGQLDWKK).

In terms of assembly, part of the SCF (SKP1-CUL1-F-box) E3 ubiquitin-protein ligase complex SCF(FBXO32) formed of CUL1, SKP1, RBX1 and FBXO32. Specifically expressed in cardiac and skeletal muscle.

Its subcellular location is the cytoplasm. The protein resides in the nucleus. It functions in the pathway protein modification; protein ubiquitination. Functionally, substrate recognition component of a SCF (SKP1-CUL1-F-box protein) E3 ubiquitin-protein ligase complex which mediates the ubiquitination and subsequent proteasomal degradation of target proteins. Probably recognizes and binds to phosphorylated target proteins during skeletal muscle atrophy. Recognizes TERF1. The protein is F-box only protein 32 (Fbxo32) of Mus musculus (Mouse).